Here is a 365-residue protein sequence, read N- to C-terminus: Ribosomal RNA large subunit methyltransferase F (365 aa).

The interval 1–49 (MSKPAVKSVQSATAKTATRAVNIRQKVKAPKQAKPEAKGRVRPSKDKPR) is disordered. Residues 33-49 (AKPEAKGRVRPSKDKPR) show a composition bias toward basic and acidic residues.

It belongs to the methyltransferase superfamily. METTL16/RlmF family.

The protein resides in the cytoplasm. The catalysed reaction is adenosine(1618) in 23S rRNA + S-adenosyl-L-methionine = N(6)-methyladenosine(1618) in 23S rRNA + S-adenosyl-L-homocysteine + H(+). Its function is as follows. Specifically methylates the adenine in position 1618 of 23S rRNA. The protein is Ribosomal RNA large subunit methyltransferase F of Shewanella baltica (strain OS185).